Here is a 447-residue protein sequence, read N- to C-terminus: Peptide chain release factor 1, mitochondrial (447 aa).

Residues 1–63 (MNRRHLFAWL…LLNKNCSRRY (63 aa)) constitute a mitochondrion transit peptide. The segment at 299–363 (PKDLRIDTFR…LRARLYQQII (65 aa)) is GGQ domain. A GGQ motif is present at residues 313-315 (GGQ). N5-methylglutamine is present on Gln-315.

The protein belongs to the prokaryotic/mitochondrial release factor family. Methylation of glutamine in the GGQ triplet by HEMK1 is conserved from bacteria to mammals.

It localises to the mitochondrion. Functionally, mitochondrial peptide chain release factor that directs the termination of translation in response to the peptide chain non-canonical stop codons AGG and AGA. Non-canonical termination codons AGG and AGA are found at the end of MT-CO1/COX1 and MT-ND6/ND6 open reading frames, respectively. Recognizes non-canonical stop codons via a network of interactions between the codon, MTRF1 and the ribosomal RNA (rRNA): in contrast to other translation release factors, which identify the codon in the A-site via direct interactions of amino acid side chains with the bases, MTRF1 repositions the first 2 bases of the stop codon to use an intricate network of interactions that includes residues of the release factor, the rRNA of the small ribosomal subunit, as well as neighboring bases of the mRNA. The chain is Peptide chain release factor 1, mitochondrial (MTRF1) from Bos taurus (Bovine).